The following is a 61-amino-acid chain: L-amino-acid oxidase (61 aa).

FAD is bound at residue 43-44 (MA).

Belongs to the flavin monoamine oxidase family. FIG1 subfamily. In terms of assembly, homodimer; non-covalently linked. Requires FAD as cofactor. Post-translationally, N-glycosylated. As to expression, expressed by the venom gland.

It localises to the secreted. It catalyses the reaction an L-alpha-amino acid + O2 + H2O = a 2-oxocarboxylate + H2O2 + NH4(+). The enzyme catalyses L-leucine + O2 + H2O = 4-methyl-2-oxopentanoate + H2O2 + NH4(+). Functionally, catalyzes an oxidative deamination of predominantly hydrophobic and aromatic L-amino acids, thus producing hydrogen peroxide that may contribute to the diverse toxic effects of this enzyme. Shows activity on L-Leu. Exhibits diverse biological activities, such as apoptosis, antibacterial activities against both Gram-negative and Gram-positive bacteria and antiparasitic activities, as well as induction of platelet aggregation. Effects of snake L-amino oxidases on platelets are controversial, since they either induce aggregation or inhibit agonist-induced aggregation. These different effects are probably due to different experimental conditions. This protein may also induce hemorrhage, hemolysis, and edema. In Crotalus durissus cascavella (Northeastern Brazilian rattlesnake), this protein is L-amino-acid oxidase.